Here is a 356-residue protein sequence, read N- to C-terminus: tRNA-specific 2-thiouridylase MnmA 1 (356 aa).

ATP-binding positions include 8–15 (GMSGGVDS) and Met-34. Cys-103 (nucleophile) is an active-site residue. An intrachain disulfide couples Cys-103 to Cys-199. Gly-127 lines the ATP pocket. The interval 149–151 (KDQ) is interaction with tRNA. Catalysis depends on Cys-199, which acts as the Cysteine persulfide intermediate. The tract at residues 305–306 (RY) is interaction with tRNA.

Belongs to the MnmA/TRMU family.

The protein resides in the cytoplasm. The catalysed reaction is S-sulfanyl-L-cysteinyl-[protein] + uridine(34) in tRNA + AH2 + ATP = 2-thiouridine(34) in tRNA + L-cysteinyl-[protein] + A + AMP + diphosphate + H(+). Its function is as follows. Catalyzes the 2-thiolation of uridine at the wobble position (U34) of tRNA, leading to the formation of s(2)U34. This chain is tRNA-specific 2-thiouridylase MnmA 1, found in Clostridium botulinum (strain ATCC 19397 / Type A).